The primary structure comprises 483 residues: NADH-quinone oxidoreductase subunit N (483 aa).

13 helical membrane passes run 7–27 (AILT…LGAV), 33–53 (ALAS…AFYI), 76–96 (FAKI…QDYM), 108–128 (VLII…DLIA), 161–181 (FVLG…AYGF), 196–216 (GGDM…GLAF), 235–255 (PTPI…ALFA), 272–292 (IVAF…IGQT), 297–317 (LMAY…SAGT), 323–343 (AMLI…AFIL), 369–389 (ALAI…LGFF), 402–422 (GLVW…FYYI), and 442–462 (MGLV…LGWV).

The protein belongs to the complex I subunit 2 family. As to quaternary structure, NDH-1 is composed of 14 different subunits. Subunits NuoA, H, J, K, L, M, N constitute the membrane sector of the complex.

It localises to the cell inner membrane. The catalysed reaction is a quinone + NADH + 5 H(+)(in) = a quinol + NAD(+) + 4 H(+)(out). NDH-1 shuttles electrons from NADH, via FMN and iron-sulfur (Fe-S) centers, to quinones in the respiratory chain. The immediate electron acceptor for the enzyme in this species is believed to be ubiquinone. Couples the redox reaction to proton translocation (for every two electrons transferred, four hydrogen ions are translocated across the cytoplasmic membrane), and thus conserves the redox energy in a proton gradient. In Jannaschia sp. (strain CCS1), this protein is NADH-quinone oxidoreductase subunit N.